Reading from the N-terminus, the 357-residue chain is Mannonate dehydratase (357 aa).

This sequence belongs to the mannonate dehydratase family. Fe(2+) serves as cofactor. It depends on Mn(2+) as a cofactor.

The catalysed reaction is D-mannonate = 2-dehydro-3-deoxy-D-gluconate + H2O. It functions in the pathway carbohydrate metabolism; pentose and glucuronate interconversion. Catalyzes the dehydration of D-mannonate. The chain is Mannonate dehydratase from Enterococcus faecalis (strain ATCC 700802 / V583).